A 346-amino-acid chain; its full sequence is Peripherin-2 (346 aa).

The Cytoplasmic segment spans residues 1-24 (MALLKVKFDQKKRVKLAQGLWLMN). Residues 25–43 (WLSVLAGIVLFSLGLFLKI) form a helical membrane-spanning segment. The Lumenal segment spans residues 44-61 (ELRKRSEVMNNSESHFVP). Residue asparagine 53 is glycosylated (N-linked (GlcNAc...) asparagine). A helical membrane pass occupies residues 62–80 (NSLIGVGVLSCVFNSLAGK). At 81 to 99 (ICYDALDPAKYAKWKPWLK) the chain is on the cytoplasmic side. Residues 100 to 123 (PYLAVCIFFNVILFLVALCCFLLR) traverse the membrane as a helical segment. Over 124-264 (GSLESTLAYG…LNYYSSLMNS (141 aa)) the chain is Lumenal. Asparagine 229 carries an N-linked (GlcNAc...) asparagine glycan. A helical transmembrane segment spans residues 265 to 290 (MGVVTLLVWLFEVSITAGLRYLHTAL). The Cytoplasmic segment spans residues 291-346 (ESVSNPEDPECESEGWLLEKSVPETWKAFLESFKKLGKSNQVEAEGADAGPAPEAG). Residues 341–346 (PAPEAG) are interaction with MREG.

This sequence belongs to the PRPH2/ROM1 family. Homodimer; disulfide-linked. Forms a homotetramer. Forms a heterotetramer with ROM1. Homotetramer and heterotetramer core complexes go on to form higher order complexes by formation of intermolecular disulfide bonds. Interacts with MREG. Interacts with STX3 isoform 3B. Interacts with SNAP25. As to expression, expressed in the retina (at protein level).

The protein localises to the membrane. It is found in the cell projection. Its subcellular location is the cilium. The protein resides in the photoreceptor outer segment. It localises to the photoreceptor inner segment. Essential for retina photoreceptor outer segment disk morphogenesis, may also play a role with ROM1 in the maintenance of outer segment disk structure. Required for the maintenance of retinal outer nuclear layer thickness. Required for the correct development and organization of the photoreceptor inner segment. The protein is Peripherin-2 (Prph2) of Mus musculus (Mouse).